The chain runs to 804 residues: Probable replication endonuclease from prophage-like region (804 aa).

Active-site O-(5'-phospho-DNA)-tyrosine intermediate residues include Tyr498 and Tyr502.

It belongs to the phage GPA family.

In terms of biological role, possible endonuclease which induces a single-strand cut and initiates DNA replication. The chain is Probable replication endonuclease from prophage-like region from Escherichia coli O6:H1 (strain CFT073 / ATCC 700928 / UPEC).